The primary structure comprises 455 residues: UDP-N-acetylmuramoylalanine--D-glutamate ligase (455 aa).

120-126 (GSNGKTT) contacts ATP.

This sequence belongs to the MurCDEF family.

The protein localises to the cytoplasm. The catalysed reaction is UDP-N-acetyl-alpha-D-muramoyl-L-alanine + D-glutamate + ATP = UDP-N-acetyl-alpha-D-muramoyl-L-alanyl-D-glutamate + ADP + phosphate + H(+). Its pathway is cell wall biogenesis; peptidoglycan biosynthesis. In terms of biological role, cell wall formation. Catalyzes the addition of glutamate to the nucleotide precursor UDP-N-acetylmuramoyl-L-alanine (UMA). The polypeptide is UDP-N-acetylmuramoylalanine--D-glutamate ligase (Pediococcus pentosaceus (strain ATCC 25745 / CCUG 21536 / LMG 10740 / 183-1w)).